A 150-amino-acid chain; its full sequence is Viral late gene transcription factor 2 (150 aa).

It belongs to the orthopoxvirus VLTF-2/OPG126 family. Interacts with the late transcription elongation factor VLTF-4/OPG110. Interacts with the late transcription factors VLTF-1/OPG093.

Its function is as follows. Acts with RNA polymerase to initiate transcription from late gene promoters. In Monkeypox virus, this protein is Viral late gene transcription factor 2 (OPG126).